Here is a 298-residue protein sequence, read N- to C-terminus: Probable tRNA(His) guanylyltransferase (298 aa).

Residues Asp58, Gly59, and Asp105 each coordinate Mg(2+). GTP is bound by residues Asp58–His63 and Ser104–Asp105.

It belongs to the tRNA(His) guanylyltransferase family. Homotetramer. Interacts with MFN1 and MFN2; functions as a guanyl-nucleotide exchange factor/GEF for MFN2 and also probably MFN1. The cofactor is Mg(2+).

It is found in the cytoplasm. The protein resides in the mitochondrion. The catalysed reaction is a 5'-end ribonucleotide-tRNA(His) + GTP + ATP + H2O = a 5'-end phospho-guanosine-ribonucleotide-tRNA(His) + AMP + 2 diphosphate + H(+). In terms of biological role, adds a GMP to the 5'-end of tRNA(His) after transcription and RNase P cleavage. This step is essential for proper recognition of the tRNA and for the fidelity of protein synthesis. Also functions as a guanyl-nucleotide exchange factor/GEF for the MFN1 and MFN2 mitofusins thereby regulating mitochondrial fusion. By regulating both mitochondrial dynamics and bioenergetic function, it contributes to cell survival following oxidative stress. This Mus musculus (Mouse) protein is Probable tRNA(His) guanylyltransferase (Thg1l).